A 677-amino-acid chain; its full sequence is Protein PALS1 (677 aa).

A required for the correct localization of PALS1 and PATJ at cell-cell contacts and the normal formation of tight junctions and adherens junctions region spans residues Met1 to Glu347. The segment at Glu39 to Ser81 is disordered. Positions Ala51–Leu76 are enriched in basic and acidic residues. 2 L27 domains span residues Ala121–Ser178 and Pro180–Glu236. A PDZ domain is found at Ile258–Ala338. In terms of domain architecture, SH3 spans Glu347–Glu419. Positions Lys481 to Asn662 constitute a Guanylate kinase-like domain. Gly488 to Asn495 provides a ligand contact to ATP. Positions Pro506–Asn526 are disordered.

The protein belongs to the MAGUK family. Expressed in the retina and in the neural tube.

It is found in the apical cell membrane. The protein localises to the cell junction. Its subcellular location is the tight junction. Functionally, plays a role in tight junction biogenesis and in the establishment of cell polarity in epithelial cells. Also involved in adherens junction biogenesis. Required for polarized epithelial organization, cell-cell adhesion and remodeling of myocardial cells during heart tube elongation during embryogenesis. Functions in cellular patterning of the retina and development of the retinal pigmented epithelium. Also required for embryo body axis specification. The sequence is that of Protein PALS1 (pals1a) from Danio rerio (Zebrafish).